The chain runs to 105 residues: Large ribosomal subunit protein uL24 (105 aa).

The protein belongs to the universal ribosomal protein uL24 family. In terms of assembly, part of the 50S ribosomal subunit.

Its function is as follows. One of two assembly initiator proteins, it binds directly to the 5'-end of the 23S rRNA, where it nucleates assembly of the 50S subunit. Functionally, one of the proteins that surrounds the polypeptide exit tunnel on the outside of the subunit. The sequence is that of Large ribosomal subunit protein uL24 from Dictyoglomus turgidum (strain DSM 6724 / Z-1310).